The primary structure comprises 345 residues: Methylthioribose-1-phosphate isomerase (345 aa).

Residues 47–49 (RGA), Arg-90, and Gln-197 each bind substrate. Residue Asp-238 is the Proton donor of the active site. A substrate-binding site is contributed by 248 to 249 (NK).

Belongs to the eIF-2B alpha/beta/delta subunits family. MtnA subfamily.

It carries out the reaction 5-(methylsulfanyl)-alpha-D-ribose 1-phosphate = 5-(methylsulfanyl)-D-ribulose 1-phosphate. Its pathway is amino-acid biosynthesis; L-methionine biosynthesis via salvage pathway; L-methionine from S-methyl-5-thio-alpha-D-ribose 1-phosphate: step 1/6. Functionally, catalyzes the interconversion of methylthioribose-1-phosphate (MTR-1-P) into methylthioribulose-1-phosphate (MTRu-1-P). The polypeptide is Methylthioribose-1-phosphate isomerase (Caldanaerobacter subterraneus subsp. tengcongensis (strain DSM 15242 / JCM 11007 / NBRC 100824 / MB4) (Thermoanaerobacter tengcongensis)).